Reading from the N-terminus, the 73-residue chain is Translation initiation factor IF-1 (73 aa).

Residues 1–73 enclose the S1-like domain; it reads MAKKEDTIVL…TKARVVYRHR (73 aa).

Belongs to the IF-1 family. In terms of assembly, component of the 30S ribosomal translation pre-initiation complex which assembles on the 30S ribosome in the order IF-2 and IF-3, IF-1 and N-formylmethionyl-tRNA(fMet); mRNA recruitment can occur at any time during PIC assembly.

It is found in the cytoplasm. One of the essential components for the initiation of protein synthesis. Stabilizes the binding of IF-2 and IF-3 on the 30S subunit to which N-formylmethionyl-tRNA(fMet) subsequently binds. Helps modulate mRNA selection, yielding the 30S pre-initiation complex (PIC). Upon addition of the 50S ribosomal subunit IF-1, IF-2 and IF-3 are released leaving the mature 70S translation initiation complex. This is Translation initiation factor IF-1 from Chlamydia caviae (strain ATCC VR-813 / DSM 19441 / 03DC25 / GPIC) (Chlamydophila caviae).